The sequence spans 152 residues: MPENLKIEVIPEGTVIDHIPAGKWLKVIEILGLTKPNGGTLLIASNVPSKKLGRKDIVKVEGRYLSEEEVNKIALIAPMATVNIVKDYKIIEKFNVEIPDEITGILKCPNPNCVSNHEYVTPRFHVESREPLKLRCHYCERTINEDEIAQNL.

Positions 108, 113, 136, and 139 each coordinate Zn(2+).

Belongs to the PyrI family. Contains catalytic and regulatory chains. It depends on Zn(2+) as a cofactor.

Its function is as follows. Involved in allosteric regulation of aspartate carbamoyltransferase. The sequence is that of Aspartate carbamoyltransferase regulatory chain from Thermococcus kodakarensis (strain ATCC BAA-918 / JCM 12380 / KOD1) (Pyrococcus kodakaraensis (strain KOD1)).